We begin with the raw amino-acid sequence, 514 residues long: Bifunctional purine biosynthesis protein PurH (514 aa).

The region spanning 1 to 143 (MTRRALISVS…KNHAGVLVLV (143 aa)) is the MGS-like domain.

The protein belongs to the PurH family.

The catalysed reaction is (6R)-10-formyltetrahydrofolate + 5-amino-1-(5-phospho-beta-D-ribosyl)imidazole-4-carboxamide = 5-formamido-1-(5-phospho-D-ribosyl)imidazole-4-carboxamide + (6S)-5,6,7,8-tetrahydrofolate. The enzyme catalyses IMP + H2O = 5-formamido-1-(5-phospho-D-ribosyl)imidazole-4-carboxamide. It functions in the pathway purine metabolism; IMP biosynthesis via de novo pathway; 5-formamido-1-(5-phospho-D-ribosyl)imidazole-4-carboxamide from 5-amino-1-(5-phospho-D-ribosyl)imidazole-4-carboxamide (10-formyl THF route): step 1/1. It participates in purine metabolism; IMP biosynthesis via de novo pathway; IMP from 5-formamido-1-(5-phospho-D-ribosyl)imidazole-4-carboxamide: step 1/1. The chain is Bifunctional purine biosynthesis protein PurH from Deinococcus geothermalis (strain DSM 11300 / CIP 105573 / AG-3a).